A 223-amino-acid polypeptide reads, in one-letter code: Triosephosphate isomerase (223 aa).

6-8 is a substrate binding site; it reads NLK. Histidine 86 serves as the catalytic Electrophile. The active-site Proton acceptor is glutamate 151. The substrate site is built by glycine 157 and serine 187.

The protein belongs to the triosephosphate isomerase family. As to quaternary structure, homodimer.

Its subcellular location is the cytoplasm. It carries out the reaction D-glyceraldehyde 3-phosphate = dihydroxyacetone phosphate. It participates in carbohydrate biosynthesis; gluconeogenesis. Its pathway is carbohydrate degradation; glycolysis; D-glyceraldehyde 3-phosphate from glycerone phosphate: step 1/1. In terms of biological role, involved in the gluconeogenesis. Catalyzes stereospecifically the conversion of dihydroxyacetone phosphate (DHAP) to D-glyceraldehyde-3-phosphate (G3P). The protein is Triosephosphate isomerase of Campylobacter jejuni subsp. jejuni serotype O:2 (strain ATCC 700819 / NCTC 11168).